Here is a 682-residue protein sequence, read N- to C-terminus: Potassium-transporting ATPase ATP-binding subunit (682 aa).

4 helical membrane passes run 34–54, 58–78, 219–239, and 254–274; these read PVMFVVWAGSVLTTLLTLAMV, IAGSALFTGIISLWLWFTVLF, IALTILLIALTIVFLLATATL, and VLVALLVCLIPTTIGGLLSAI. The active-site 4-aspartylphosphate intermediate is the aspartate 307. Residues aspartate 344, glutamate 348, 377–384, and lysine 395 each bind ATP; that span reads FTAQSRMS. Residues aspartate 518 and aspartate 522 each contribute to the Mg(2+) site. 3 helical membrane passes run 588–608, 616–636, and 662–682; these read FAIIPAAFAATYPQLNALNVM, AILSAVIFNALIIIFLIPLAL, and LLVPFIGIKVIDVLLTLLGLA.

The protein belongs to the cation transport ATPase (P-type) (TC 3.A.3) family. Type IA subfamily. In terms of assembly, the system is composed of three essential subunits: KdpA, KdpB and KdpC.

Its subcellular location is the cell inner membrane. The catalysed reaction is K(+)(out) + ATP + H2O = K(+)(in) + ADP + phosphate + H(+). Functionally, part of the high-affinity ATP-driven potassium transport (or Kdp) system, which catalyzes the hydrolysis of ATP coupled with the electrogenic transport of potassium into the cytoplasm. This subunit is responsible for energy coupling to the transport system and for the release of the potassium ions to the cytoplasm. The chain is Potassium-transporting ATPase ATP-binding subunit from Salmonella dublin (strain CT_02021853).